The primary structure comprises 492 residues: Cytochrome P450 2B12 (492 aa).

Serine 129 is modified (phosphoserine). Cysteine 437 is a heme binding site.

This sequence belongs to the cytochrome P450 family. Heme serves as cofactor. As to expression, preputial gland, but not in liver.

Its subcellular location is the endoplasmic reticulum membrane. It is found in the microsome membrane. It catalyses the reaction an organic molecule + reduced [NADPH--hemoprotein reductase] + O2 = an alcohol + oxidized [NADPH--hemoprotein reductase] + H2O + H(+). In terms of biological role, cytochromes P450 are a group of heme-thiolate monooxygenases. In liver microsomes, this enzyme is involved in an NADPH-dependent electron transport pathway. This isozyme seems responsible for metabolism of 2,2',4,4',5,5'-hexachlorobiphenyl. This chain is Cytochrome P450 2B12 (Cyp2b12), found in Rattus norvegicus (Rat).